A 317-amino-acid polypeptide reads, in one-letter code: U5 small nuclear ribonucleoprotein TSSC4 (317 aa).

Over residues 1–19 (MAETEAGLEADEPTEDDTL) the composition is skewed to acidic residues. Residues 1–74 (MAETEAGLEA…PPTGTLTTAV (74 aa)) are disordered. Residues 20-37 (PSDTVSLSDSDSDLSLPS) show a composition bias toward low complexity. Residues Ser-57, Ser-64, Ser-83, and Ser-92 each carry the phosphoserine modification. The interval 74-101 (VQPFHLRGMSSTFSQRSHSIFDCLESAA) is hom2; mediates interaction with the U5 snRNP complexes and required for spliceosomal tri-snRNP complex assembly. The disordered stretch occupies residues 101–152 (ARQAPCSAPQTSVSDNGSFRRPVTPPSQTPARGLSRVHGNTGPTRVLPVPDY). The span at 108–117 (APQTSVSDNG) shows a compositional bias: polar residues. Position 124 is a phosphothreonine (Thr-124). Residues 146–300 (VLPVPDYVSH…SKKRSRDHFR (155 aa)) form an interaction with SNRNP200 region. The tract at residues 147–183 (LPVPDYVSHPERWTKYSLEDVSEASEQSNRDAALAFL) is hom3; mediates interaction with the U5 snRNP complexes. Residues 198 to 238 (FNQDPSSCGEGRVVFTKPVRDSEARAERKRVLKKGVGSGAG) are hom4; necessary for interaction with the PRPF19 complex and required for spliceosomal tri-snRNP complex assembly. N6-acetyllysine is present on Lys-214. The disordered stretch occupies residues 216–317 (VRDSEARAER…GPGSERGPSV (102 aa)). The segment covering 240 to 250 (EAAVELAHLAG) has biased composition (low complexity).

It belongs to the TSSC4 family. As to quaternary structure, interacts in a RNA-independent manner with distinct U5 snRNP-containing complexes, the mono-U5 snRNP and the post-splicing U5 snRNP-PRPF19 complex. Interacts with SNRNP200; the interaction is direct, excludes recruitment of C9ORF78 and WBP4 to SNRNP200 and negatively regulates its RNA helicase activity. Interacts with PRPF8; the interaction is direct. In terms of tissue distribution, expressed in placenta. Widely expressed in embryo and newborn.

The protein resides in the nucleus. The protein localises to the cytoplasm. Its function is as follows. Protein associated with the U5 snRNP, during its maturation and its post-splicing recycling and which is required for spliceosomal tri-snRNP complex assembly in the nucleus. Has a molecular sequestering activity and transiently hinders SNRNP200 binding sites for constitutive splicing factors that intervene later during the assembly of the spliceosome and splicing. Together with its molecular sequestering activity, may also function as a molecular adapter and placeholder, coordinating the assembly of the U5 snRNP and its association with the U4/U6 di-snRNP. In Mus musculus (Mouse), this protein is U5 small nuclear ribonucleoprotein TSSC4.